The following is a 263-amino-acid chain: 3-oxo-5-alpha-steroid 4-dehydrogenase 1 (263 aa).

5 consecutive transmembrane segments (helical) span residues 16 to 33 (MLAA…AVLA), 90 to 110 (ILLA…PFLM), 115 to 135 (PMPL…GYLQ), 155 to 175 (FLIG…SDHI), and 213 to 233 (YALA…FCFL).

Belongs to the steroid 5-alpha reductase family.

The protein localises to the microsome membrane. It localises to the endoplasmic reticulum membrane. The enzyme catalyses a 3-oxo-5alpha-steroid + NADP(+) = a 3-oxo-Delta(4)-steroid + NADPH + H(+). The catalysed reaction is 5alpha-pregnane-3,20-dione + NADP(+) = progesterone + NADPH + H(+). It carries out the reaction 17beta-hydroxy-5alpha-androstan-3-one + NADP(+) = testosterone + NADPH + H(+). It catalyses the reaction androst-4-ene-3,17-dione + NADPH + H(+) = 5alpha-androstan-3,17-dione + NADP(+). Its function is as follows. Converts testosterone into 5-alpha-dihydrotestosterone and progesterone or corticosterone into their corresponding 5-alpha-3-oxosteroids. It plays a central role in sexual differentiation and androgen physiology. The chain is 3-oxo-5-alpha-steroid 4-dehydrogenase 1 (SRD5A1) from Macaca fascicularis (Crab-eating macaque).